A 410-amino-acid chain; its full sequence is ACT domain-containing protein ACR10 (410 aa).

3 ACT domains span residues 22–105 (VITI…SESQ), 114–197 (LLKL…LVGP), and 245–324 (LIHI…VVMM).

In terms of biological role, may bind amino acids. This is ACT domain-containing protein ACR10 from Arabidopsis thaliana (Mouse-ear cress).